The sequence spans 219 residues: 3-dehydroquinate dehydratase (219 aa).

3-dehydroquinate is bound by residues 34 to 36 (ELR) and Arg63. The active-site Proton donor/acceptor is the His114. The active-site Schiff-base intermediate with substrate is Lys139. 3-dehydroquinate contacts are provided by Arg174, Thr193, and Gln197.

The protein belongs to the type-I 3-dehydroquinase family. As to quaternary structure, homodimer.

It carries out the reaction 3-dehydroquinate = 3-dehydroshikimate + H2O. The protein operates within metabolic intermediate biosynthesis; chorismate biosynthesis; chorismate from D-erythrose 4-phosphate and phosphoenolpyruvate: step 3/7. Involved in the third step of the chorismate pathway, which leads to the biosynthesis of aromatic amino acids. Catalyzes the cis-dehydration of 3-dehydroquinate (DHQ) and introduces the first double bond of the aromatic ring to yield 3-dehydroshikimate. This chain is 3-dehydroquinate dehydratase, found in Sulfolobus acidocaldarius (strain ATCC 33909 / DSM 639 / JCM 8929 / NBRC 15157 / NCIMB 11770).